We begin with the raw amino-acid sequence, 208 residues long: Small ribosomal subunit protein uS4 (208 aa).

The S4 RNA-binding domain maps to 98–163 (QRLDNVVYRM…NPQITRAIEL (66 aa)).

Belongs to the universal ribosomal protein uS4 family. Part of the 30S ribosomal subunit. Contacts protein S5. The interaction surface between S4 and S5 is involved in control of translational fidelity.

One of the primary rRNA binding proteins, it binds directly to 16S rRNA where it nucleates assembly of the body of the 30S subunit. Functionally, with S5 and S12 plays an important role in translational accuracy. This chain is Small ribosomal subunit protein uS4, found in Campylobacter jejuni (strain RM1221).